A 706-amino-acid chain; its full sequence is Gamma-adducin (706 aa).

Polar residues predominate over residues 1-10; it reads MSSDASQGVI. The interval 1–20 is disordered; it reads MSSDASQGVITTPPPPSMPH. The residue at position 2 (Ser2) is an N-acetylserine. A phosphoserine mark is found at Ser42, Ser64, Ser402, Ser414, Ser423, Ser442, and Ser461. Disordered stretches follow at residues 471-497, 535-555, 575-610, and 666-706; these read AEDS…LNTN, PSTM…NPFS, GLED…KLEE, and EKIE…KVEA. Residue Lys484 forms a Glycyl lysine isopeptide (Lys-Gly) (interchain with G-Cter in SUMO2) linkage. Phosphoserine is present on residues Ser585, Ser590, Ser673, Ser677, Ser679, Ser681, and Ser683. The span at 589–602 shows a compositional bias: low complexity; that stretch reads SSVSQIQSQTQSPQ. Residues 682–706 are compositionally biased toward basic residues; it reads PSKKKKKFRTPSFLKKNKKKEKVEA. Residues 684–701 form an interaction with calmodulin region; it reads KKKKKFRTPSFLKKNKKK.

This sequence belongs to the aldolase class II family. Adducin subfamily. Heterodimer of an alpha and a gamma subunit. Post-translationally, sumoylated. Proteolytically cleaved by asparagine endopeptidase (AEP) into 2 fragments. Overexpression of the 1-357 fragment induces neuronal apoptosis, and overexpression of either 1-357 or 358-706 fragment increases the degeneration of dendritic spines. Overexpression of the 1-357 fragment impairs neurite outgrowth by downregulating the expression of Rac2, and induces synaptic dysfunction and cognitive impairments in tau P301S transgenic mice, a mouse model for Alzheimer disease (AD). In terms of tissue distribution, ubiquitously expressed. Cleavage fragment 1-357 is abundantly expressed in the brain of patients with Alzheimer disease (AD), but hardly detectable in age-matched control individuals (at protein level).

The protein localises to the cytoplasm. It is found in the cytoskeleton. It localises to the cell membrane. Functionally, membrane-cytoskeleton-associated protein that promotes the assembly of the spectrin-actin network. Plays a role in actin filament capping. Binds to calmodulin. Involved in myogenic reactivity of the renal afferent arteriole (Af-art), renal interlobular arteries and middle cerebral artery (MCA) to increased perfusion pressure. Involved in regulation of potassium channels in the vascular smooth muscle cells (VSMCs) of the Af-art and MCA ex vivo. Involved in regulation of glomerular capillary pressure, glomerular filtration rate (GFR) and glomerular nephrin expression in response to hypertension. Involved in renal blood flow (RBF) autoregulation. Plays a role in podocyte structure and function. Regulates globular monomer actin (G-actin) and filamentous polymer actin (F-actin) ratios in the primary podocytes affecting actin cytoskeleton organization. Regulates expression of synaptopodin, RhoA, Rac1 and CDC42 in the renal cortex and the primary podocytes. Regulates expression of nephrin in the glomeruli and in the primary podocytes, expression of nephrin and podocinin in the renal cortex, and expression of focal adhesion proteins integrin alpha-3 and integrin beta-1 in the glomeruli. Involved in cell migration and cell adhesion of podocytes, and in podocyte foot process effacement. Regulates expression of profibrotics markers MMP2, MMP9, TGF beta-1, tubular tight junction protein E-cadherin, and mesenchymal markers vimentin and alpha-SMA. Promotes the growth of neurites. The protein is Gamma-adducin (ADD3) of Homo sapiens (Human).